The primary structure comprises 5495 residues: Microtubule-associated protein futsch (5495 aa).

Disordered stretches follow at residues 1-97 (MGDQ…DADG), 656-975 (AKAD…LKEE), 988-1074 (RDEM…AEEE), 1086-1111 (ERKARLEGASARQDESELDVEPEQSK), 1128-1167 (KSRTEEQLAKPAEEELSSPTPEEKLSKKTSDTKDDQIGAP), 1185-1204 (SATIESGATTAPTLPEDERI), 1255-1275 (KDAPKDANAEALGELPDSGER), 1306-1358 (HEEA…EPNK), 1402-1840 (NQED…VVES), 1866-2631 (EIGK…PGFV), 2709-2810 (AKTV…KDFA), 2830-4166 (LPTL…DLSL), 4196-4230 (KAESSPRPAVLSKPAEFSQPDTGHTASTPVDEASP), 4362-4612 (IIPD…ASQL), 4636-4668 (AQKSNKEIKDARETKVTSQFTTTTSSATKDDSL), 4687-4975 (AFST…QMLA), 5035-5065 (KTVTTTDSSEPDSEKVVVTTTRTTSESERDQ), 5101-5138 (SYELQHSSSGVSKRSDLDADGDESQDDIPPQYGSEEHS), 5170-5199 (PSTEPIPIQGAPSGDSQSSESVESSSQTWA), and 5328-5350 (GLPSPAPLPVEGGADIRTTPKKE). Low complexity predominate over residues 35–48 (AKGAGDGPAQDAAQ). Basic and acidic residues-rich tracts occupy residues 656–672 (AKADSMDTDAEPEHEAD), 696–716 (EPEHEPEAEQDKDVGEEKKVE), and 758–795 (GKADKPRAEVKPVVRSRIDTKPPKSMDRKLAKRDEKKS). Composition is skewed to low complexity over residues 797 to 806 (PTTTPAARAP) and 819 to 831 (PATKSSPSSTPAK). A compositionally biased stretch (basic and acidic residues) spans 832–843 (SAKEANNRKVLE). Low complexity predominate over residues 850–888 (RVQATSTVSRRVTSTASERRVQQQAEAKTAATGATQATQ). Positions 918–931 (KAADLKKTRLDKGG) are enriched in basic and acidic residues. Positions 932–942 (TTDSSLVSTPS) are enriched in polar residues. Composition is skewed to basic and acidic residues over residues 962–975 (DAEKQRELDDLKEE) and 988–1007 (RDEMKRQQHQQIKAELREMP). The span at 1012–1041 (GDGENEPDEEEEYLIIEKEEVEQYTEDSIV) shows a compositional bias: acidic residues. Over residues 1047–1065 (MTKEEEIQKHQRDSQESEK) the composition is skewed to basic and acidic residues. 2 stretches are compositionally biased toward basic and acidic residues: residues 1128 to 1140 (KSRTEEQLAKPAE) and 1148 to 1163 (PEEKLSKKTSDTKDDQ). The segment covering 1187 to 1196 (TIESGATTAP) has biased composition (polar residues). Composition is skewed to basic and acidic residues over residues 1306 to 1319 (HEEADLGLYEKDSQ), 1327 to 1337 (SHKEESAKEEK), 1343 to 1358 (KENKVGEIELGDEPNK), and 1408 to 1443 (EQVKDKEEHEQKIESGIITEKEAKKSASTPEEKETS). 2 tandem repeats follow at residues 1469–1502 (REDTGSIESPPTIEEAIEVEVQAKQEAQKPVPAP) and 1513–1539 (LASKETSRPESATGSVKEDTEQTKSKK). A 53 X approximate repeat region spans residues 1469 to 4032 (REDTGSIESP…SPLASKESSR (2564 aa)). Composition is skewed to basic and acidic residues over residues 1546 to 1555 (PESEAKDKKS), 1571 to 1663 (SVKD…DEKS), 1679 to 1696 (SVKDETEKSKEPSRRESI), 1718 to 1732 (GIKDESAKPESRRDS), and 1748 to 1779 (SVKDEPIKSTEKSRRESVAESFKADSTKDEKS). Repeat copies occupy residues 1622-1649 (KSALASKEASRPESVTDKSKEPSRRESI), 1660-1686 (DEKSAPPSKEASRPGSVVESVKDETEK), 1690-1718 (PSRRESIAESAKPPIEFREVSRPESVIDG), 1755-1782 (KSTEKSRRESVAESFKADSTKDEKSPLT), 1790-1818 (ESAVENVMDAVGSAERSQPESVTASRDVS), 1837-1865 (VVESVIPASDVVEIEKGAADKEKGVFVSL), 1874-1902 (SEVISRPGPVVESVKPESRRESSTEIVLP), 1911-1939 (PSRPESKVECLKDESEVLKGSTRRESVAE), 1948-1976 (KETSRPESAVGSMKDESMSKEPSRRESVK), 1985-2013 (TSRPASVAESAKDGADDLKELSRPESTTQ), 2022-2050 (DEKSPLASEEASRPASVAESVKDEAEKSK), 2059-2087 (AEKSPLPSKEASRPASVAESIKDEAEKSK), 2096-2124 (AEKSPLPSKEASRPASVAESIKDEAEKSK), 2133-2161 (AEKSPLPSKEASRPASVAESIKDEAEKSK), 2170-2198 (AEKSPLPSKEASRPASVAESIKDEAEKSK), 2215-2243 (KEASRPASVAESIKDEAEKSKEESRRESV), and 2262-2292 (ESIKDEAEKSKEESRRESVAEKSPLPSKEAS). A compositionally biased stretch (polar residues) spans 1804-1815 (ERSQPESVTASR). Basic and acidic residues-rich tracts occupy residues 1887 to 1896 (VKPESRRESS), 1904 to 1942 (HAEDSKEPSRPESKVECLKDESEVLKGSTRRESVAESDK), 1960 to 1976 (MKDESMSKEPSRRESVK), 1994 to 2007 (SAKDGADDLKELSR), 2041 to 2059 (SVKDEAEKSKEESRRESVA), 2078 to 2096 (SIKDEAEKSKEESRRESVA), 2115 to 2133 (SIKDEAEKSKEESRRESVA), 2152 to 2170 (SIKDEAEKSKEESRRESVA), 2189 to 2207 (SIKDEAEKSKEESRRESVA), 2226 to 2244 (SIKDEAEKSKEESRRESVA), 2263 to 2281 (SIKDEAEKSKEESRRESVA), 2300 to 2318 (SIKDEAEKSKEETRRESVA), 2337 to 2355 (SIKDEAEKSKEESRRESAA), 2374 to 2391 (SVKDEADKSKEESRRESM), 2419 to 2435 (SVKDDPVKSKEPSRRES), 2466 to 2482 (SVKDEAEKQESRRESKT), 2560 to 2588 (IKYDLDKPQIIKDDKSTEHSRRESLEDKS), and 2604 to 2627 (SDHEAAVAIEDDAKSSISPKDKSR). Repeat 20 spans residues 2355–2391 (AEKSPLPSKEASRPASVAESVKDEADKSKEESRRESM). 2 consecutive repeat copies span residues 2703 to 2726 (LAQIGAAKTVSSPLDEALRTPSAP) and 2761 to 2787 (WVAESKDDAAQLKSSVEDLRSPVASTE). The span at 2764-2780 (ESKDDAAQLKSSVEDLR) shows a compositional bias: basic and acidic residues. Ser2800 bears the Phosphoserine; by GSK3-beta mark. Tandem repeats lie at residues 2820 to 2846 (LPLTIELKGNLPTLSSPVDVAHGDFPQ), 2864 to 2892 (LSKVDIEKTASSPIDEAPKSLIGCPAEER), and 2907 to 2933 (VEKSKDASRPPSVVESTKADSTKGDIS). A compositionally biased stretch (low complexity) spans 2845–2861 (PQTSTPTSSPTVASVQP). Basic and acidic residues-rich tracts occupy residues 2889–2914 (AEERPESPAESAKDAAESVEKSKDAS) and 2942–2954 (GPKDDVEKSKESS). Residues 2955 to 2966 (RPPSVSASITGD) are compositionally biased toward polar residues. 28 consecutive repeat copies span residues 2956 to 2987 (PPSVSASITGDSTKDVSRPASVVESVKDEHDK), 3006 to 3034 (GKSDSKSSSQDSQKDEKSTLASKEASRRE), 3049 to 3075 (SRPESVIASGEPVPRESKSPLDSKDTS), 3089 to 3117 (EKSEQQSRRESVAESVKADTKKDGKSQEA), 3131 to 3158 (DEKQESRRQSITGSHKAMSTMGDESPMD), 3200 to 3224 (KSDITKGEKSPLPSKEVSRPESVVG), 3228 to 3256 (DEKAESRRESVAESVKPESSKDATSAPPS), 3265 to 3293 (VLGSLKDEGDKTTSRRVSVADSIKDEKSL), 3302 to 3330 (PESEAESLKDAAAPSQETSRPESVTESVK), 3339 to 3367 (KEASRPASVAENAKDSADESKEQRPESLP), 3376 to 3404 (DEKSPLASKDEAEKSKEESRRESVAEQFP), 3413 to 3441 (PASVAESVKDEAEKSKEESPLMSKEASRP), 3450 to 3478 (DEAEKSKEESRRESVAEKSPLPSKEASRP), 3487 to 3515 (DEADKSKEESRRESGAEKSPLASKEASRP), 3524 to 3552 (DEAEKSKEESRRESVAEKSPLPSKEASRP), 3561 to 3589 (DEAEKSKEESRRDSVAEKSPLASKEASRP), 3598 to 3626 (DEAEKSKEESRRESVAEKSPLASKEASRP), 3635 to 3663 (DEAEKSKEESRRESVAEKSPLASKEASRP), 3672 to 3700 (DEAEKSKEESSRDSVAEKSPLASKEASRP), 3709 to 3737 (DEAEKSKEESRRESVAEKSPLASKEASRP), 3746 to 3774 (DDAEKSKEESRRESVAEKSPLASKEASRP), 3783 to 3811 (DEAEKSKEESRRESVAEKSPLPSKEASRP), 3820 to 3848 (DEAEKSKEESRRESVAEKSSLASKKASRP), 3867 to 3894 (RRESVAEKSPLASKEASRPASVAESVKD), 3895 to 3921 (EAEKSKEESRRESVAEKSPLPSKEASR), 3931 to 3958 (DEADKSKEESRRESGAEKSPLASMEASR), 3968 to 3995 (DETEKSKEESRRESVTEKSPLPSKEASR), and 4005 to 4032 (DEAEKSKEESRRESVAEKSPLASKESSR). 7 stretches are compositionally biased toward basic and acidic residues: residues 2980–2996 (SVKDEHDKAESRRESIA), 3017–3051 (SQKDEKSTLASKEASRRESVVESSKDDAEKSESRP), 3061–3075 (VPRESKSPLDSKDTS), 3087–3116 (EDEKSEQQSRRESVAESVKADTKKDGKSQE), 3156–3168 (PMDKADKSKEPSR), 3175–3208 (SIKHENTKDEESPLGSRRDSVAESIKSDITKGEK), and 3226–3248 (IKDEKAESRRESVAESVKPESSK). Ser3067, Ser3071, and Ser3075 each carry phosphoserine. Over residues 3300–3310 (SRPESEAESLK) the composition is skewed to basic and acidic residues. Positions 3316–3327 (SQETSRPESVTE) are enriched in polar residues. Composition is skewed to basic and acidic residues over residues 3350-3363 (NAKDSADESKEQRP), 3373-3399 (SIKDEKSPLASKDEAEKSKEESRRESV), 3419-3431 (SVKDEAEKSKEES), 3448-3465 (VKDEAEKSKEESRRESVA), 3484-3502 (SVKDEADKSKEESRRESGA), 3521-3539 (SIKDEAEKSKEESRRESVA), 3558-3576 (SVKDEAEKSKEESRRDSVA), 3599-3613 (EAEKSKEESRRESVA), 3632-3650 (SIKDEAEKSKEESRRESVA), 3669-3687 (SVKDEAEKSKEESSRDSVA), 3710-3724 (EAEKSKEESRRESVA), 3743-3761 (SVKDDAEKSKEESRRESVA), 3780-3798 (SVKDEAEKSKEESRRESVA), and 3817-3835 (SVKDEAEKSKEESRRESVA). Low complexity predominate over residues 3836–3850 (EKSSLASKKASRPAS). Composition is skewed to basic and acidic residues over residues 3854–3872 (SVKDEAEKSKEESRRESVA), 3891–3909 (SVKDEAEKSKEESRRESVA), 3928–3946 (SVKDEADKSKEESRRESGA), 3965–3983 (SVKDETEKSKEESRRESVT), 4002–4020 (SVKDEAEKSKEESRRESVA), 4039–4066 (SIKDEAEGTKQESRRESMPESGKAESIK), 4086–4095 (SVKDETEKPE), and 4115–4141 (AKDEKSPLHSRPESVADKSPDASKEAS). Polar residues-rich tracts occupy residues 4142–4152 (RSLSVAETASS) and 4214–4223 (QPDTGHTAST). Composition is skewed to basic and acidic residues over residues 4362–4379 (IIPDFDERQLEEKLKSTA), 4386–4410 (DKSTRDEKSLEISVKVEIESEKSSP), and 4419–4432 (IEEKDKIEQSEKAQ). A compositionally biased stretch (low complexity) spans 4443–4461 (PESVASQPESVPSPSQSAA). Residues 4462 to 4481 (SHEHKEVELSESHKAEKSSR) are compositionally biased toward basic and acidic residues. Residues 4498–4508 (RPASSTSQFST) are compositionally biased toward polar residues. Residues 4517-4528 (ESLLHSLTTTET) are compositionally biased toward low complexity. The segment covering 4529–4539 (VETKQMEEKSS) has biased composition (basic and acidic residues). A compositionally biased stretch (low complexity) spans 4540-4560 (FESVSTSVTKSTVLSSQSTVQ). 2 stretches are compositionally biased toward basic and acidic residues: residues 4575–4584 (KVEDSSRRES) and 4639–4650 (SNKEIKDARETK). Low complexity-rich tracts occupy residues 4651-4662 (VTSQFTTTTSSA) and 4703-4714 (TTASAVSSTSAS). The segment covering 4744–4754 (PEDEEPADDVD) has biased composition (acidic residues). Basic and acidic residues-rich tracts occupy residues 4755–4764 (ERSSVKESRS) and 4788–4798 (LVEEEHEHVEE). Low complexity predominate over residues 4804-4829 (TSTSKTTTLLQSSEQSSTTTSSTSKT). Polar residues predominate over residues 4835 to 4851 (ESITLTQMDQQTSQSQG). Residues 4875 to 4905 (GSAGSVIGAGAGAVAAGGKCESSAASIVSSS) are compositionally biased toward low complexity. Over residues 4915 to 4930 (GKSSPGALTSESQSIP) the composition is skewed to polar residues. Ser4950 carries the phosphoserine; by GSK3-beta modification. Basic and acidic residues predominate over residues 4955 to 4970 (VSKDELKSLEMQHHSQ). Residues 5101–5112 (SYELQHSSSGVS) are compositionally biased toward polar residues. The span at 5185–5196 (SQSSESVESSSQ) shows a compositional bias: low complexity.

In terms of assembly, heterodimer of a heavy and a light chain. Interacts with Fmr1. Found in a complex with tubulin and Futsch. In terms of processing, several minor light chains can be created with markedly different pIs. Phosphorylated by SGG/GSK3. Phosphorylated by LRRK2 at the presynapse of neuromuscular junctions, which negatively regulates the activity controlling synaptic differentiation. Neuronal cells within the PNS and CNS.

Its subcellular location is the cytoplasm. The protein localises to the cytoskeleton. Functionally, during embryogenesis, necessary for dendritic and axonal organization and growth at the neuromuscular junction through the regulation of the synaptic microtubule cytoskeleton. Microtubule hairpin loops are found within a small subset of synaptic boutons at the neuromuscular synapse, these loops are stabilized by futsch. Loop morphology and dynamics suggest that rearrangement of these microtubule-based loops is a critical component of the process of bouton division and for subsequent nerve-terminal growth and branching. Translation is repressed by Fmr1. Together with ringer, required for neuromuscular junction (NMJ) bouton growth by regulating synaptic microtubules. Function with ringer in maintaining microtubule stability and dynamics, is essential for promoting axon regeneration in response to peripheral (PNS) and central nervous system (CNS) injury. In response to axotomy, acts downstream of a stress response cascade involving Xbp1 splicing, to control axon regeneration. In Drosophila melanogaster (Fruit fly), this protein is Microtubule-associated protein futsch (futsch).